The sequence spans 416 residues: Ribulose bisphosphate carboxylase large chain (416 aa).

K5 bears the N6,N6,N6-trimethyllysine mark. Substrate is bound by residues N114 and T164. K166 acts as the Proton acceptor in catalysis. Residue K168 participates in substrate binding. The Mg(2+) site is built by K192, D194, and E195. N6-carboxylysine is present on K192. H285 (proton acceptor) is an active-site residue. 3 residues coordinate substrate: R286, H318, and S370.

Belongs to the RuBisCO large chain family. Type I subfamily. Heterohexadecamer of 8 large chains and 8 small chains; disulfide-linked. The disulfide link is formed within the large subunit homodimers. Mg(2+) serves as cofactor. Post-translationally, the disulfide bond which can form in the large chain dimeric partners within the hexadecamer appears to be associated with oxidative stress and protein turnover.

The protein localises to the plastid. It localises to the chloroplast. It catalyses the reaction 2 (2R)-3-phosphoglycerate + 2 H(+) = D-ribulose 1,5-bisphosphate + CO2 + H2O. It carries out the reaction D-ribulose 1,5-bisphosphate + O2 = 2-phosphoglycolate + (2R)-3-phosphoglycerate + 2 H(+). Functionally, ruBisCO catalyzes two reactions: the carboxylation of D-ribulose 1,5-bisphosphate, the primary event in carbon dioxide fixation, as well as the oxidative fragmentation of the pentose substrate in the photorespiration process. Both reactions occur simultaneously and in competition at the same active site. The sequence is that of Ribulose bisphosphate carboxylase large chain (rbcL) from Spigelia marilandica (Woodland pinkroot).